Reading from the N-terminus, the 401-residue chain is Argininosuccinate synthase (401 aa).

9 to 17 (AYSGGLDTS) lines the ATP pocket. Tyrosine 86 contacts L-citrulline. Glycine 116 serves as a coordination point for ATP. Residues threonine 118, asparagine 122, and aspartate 123 each contribute to the L-aspartate site. Asparagine 122 serves as a coordination point for L-citrulline. L-citrulline is bound by residues arginine 126, serine 174, serine 183, glutamate 259, and tyrosine 271.

It belongs to the argininosuccinate synthase family. Type 1 subfamily. Homotetramer.

It localises to the cytoplasm. The catalysed reaction is L-citrulline + L-aspartate + ATP = 2-(N(omega)-L-arginino)succinate + AMP + diphosphate + H(+). The protein operates within amino-acid biosynthesis; L-arginine biosynthesis; L-arginine from L-ornithine and carbamoyl phosphate: step 2/3. This chain is Argininosuccinate synthase, found in Bacillus anthracis (strain A0248).